The primary structure comprises 159 residues: uncharacterized protein (159 aa).

A run of 2 helical transmembrane segments spans residues 59–79 (IGAL…ALVY) and 91–113 (VFSV…RRVC).

Its subcellular location is the cell membrane. This is an uncharacterized protein from Treponema pallidum (strain Nichols).